The chain runs to 452 residues: Photoreceptor ankyrin repeat protein (452 aa).

ANK repeat units follow at residues 94–123 (CRLGALYWACVHNDPTQLQAILDGGVSPEE), 130–160 (NGRTGLMVACYHGFQSVVALLSHCPFLDVNQ), 164–193 (GGDTALMLAAQAGHVPLVSLLLNYYVGLDL), and 223–257 (RGKTALEWAVLTDSFDTVWRIRQLLRRPQVEQLSQ). 2 disordered regions span residues 335–369 (LGTRSKSVPELLGTAPPPPLVPQSPPGSPQRSPWV) and 405–427 (SKASSSSHQCQPKPSPSGHQSLA). Residues 349–362 (APPPPLVPQSPPGS) show a composition bias toward pro residues. Residues 406 to 424 (KASSSSHQCQPKPSPSGHQ) show a composition bias toward polar residues.

The protein localises to the cytoplasm. The protein resides in the cytosol. Its subcellular location is the nucleus. Functionally, acts as a transcriptional repressor for CRX-activated photoreceptor gene regulation. The chain is Photoreceptor ankyrin repeat protein from Homo sapiens (Human).